We begin with the raw amino-acid sequence, 379 residues long: Succinyl-diaminopimelate desuccinylase (379 aa).

A Zn(2+)-binding site is contributed by H70. D72 is an active-site residue. D103 lines the Zn(2+) pocket. The Proton acceptor role is filled by E137. 3 residues coordinate Zn(2+): E138, E166, and H352.

It belongs to the peptidase M20A family. DapE subfamily. Homodimer. Zn(2+) serves as cofactor. Requires Co(2+) as cofactor.

It catalyses the reaction N-succinyl-(2S,6S)-2,6-diaminopimelate + H2O = (2S,6S)-2,6-diaminopimelate + succinate. It functions in the pathway amino-acid biosynthesis; L-lysine biosynthesis via DAP pathway; LL-2,6-diaminopimelate from (S)-tetrahydrodipicolinate (succinylase route): step 3/3. Its function is as follows. Catalyzes the hydrolysis of N-succinyl-L,L-diaminopimelic acid (SDAP), forming succinate and LL-2,6-diaminopimelate (DAP), an intermediate involved in the bacterial biosynthesis of lysine and meso-diaminopimelic acid, an essential component of bacterial cell walls. The sequence is that of Succinyl-diaminopimelate desuccinylase from Burkholderia vietnamiensis (strain G4 / LMG 22486) (Burkholderia cepacia (strain R1808)).